The primary structure comprises 68 residues: Sec-independent protein translocase protein TatA (68 aa).

Residues 1 to 21 form a helical membrane-spanning segment; it reads MGSFSIWHWLIVLAVVLLLFG. The tract at residues 42–68 is disordered; that stretch reads GMGDDEVASADKSVDGKTVDHKSDEVR. A compositionally biased stretch (basic and acidic residues) spans 53–68; that stretch reads KSVDGKTVDHKSDEVR.

The protein belongs to the TatA/E family. In terms of assembly, the Tat system comprises two distinct complexes: a TatABC complex, containing multiple copies of TatA, TatB and TatC subunits, and a separate TatA complex, containing only TatA subunits. Substrates initially bind to the TatABC complex, which probably triggers association of the separate TatA complex to form the active translocon.

The protein resides in the cell inner membrane. Its function is as follows. Part of the twin-arginine translocation (Tat) system that transports large folded proteins containing a characteristic twin-arginine motif in their signal peptide across membranes. TatA could form the protein-conducting channel of the Tat system. The sequence is that of Sec-independent protein translocase protein TatA from Rhizobium meliloti (strain 1021) (Ensifer meliloti).